A 195-amino-acid chain; its full sequence is Dephospho-CoA kinase (195 aa).

The DPCK domain occupies 3–195 (IIGLTGSIAM…FSIIENLLKN (193 aa)). 11–16 (AMGKST) lines the ATP pocket.

This sequence belongs to the CoaE family.

The protein localises to the cytoplasm. It carries out the reaction 3'-dephospho-CoA + ATP = ADP + CoA + H(+). It participates in cofactor biosynthesis; coenzyme A biosynthesis; CoA from (R)-pantothenate: step 5/5. Functionally, catalyzes the phosphorylation of the 3'-hydroxyl group of dephosphocoenzyme A to form coenzyme A. The chain is Dephospho-CoA kinase from Bartonella quintana (strain Toulouse) (Rochalimaea quintana).